The sequence spans 280 residues: UPF0276 protein CC_2906 (280 aa).

This sequence belongs to the UPF0276 family.

The sequence is that of UPF0276 protein CC_2906 from Caulobacter vibrioides (strain ATCC 19089 / CIP 103742 / CB 15) (Caulobacter crescentus).